A 352-amino-acid polypeptide reads, in one-letter code: Maleylacetate reductase (352 aa).

Belongs to the iron-containing alcohol dehydrogenase family.

It catalyses the reaction 3-oxoadipate + NAD(+) = maleylacetate + NADH + H(+). The catalysed reaction is 3-oxoadipate + NADP(+) = maleylacetate + NADPH + H(+). It participates in aromatic compound metabolism; 3-chlorocatechol degradation. The protein is Maleylacetate reductase (clcE) of Pseudomonas knackmussii (strain DSM 6978 / CCUG 54928 / LMG 23759 / B13).